A 304-amino-acid polypeptide reads, in one-letter code: UDP-3-O-acyl-N-acetylglucosamine deacetylase (304 aa).

Zn(2+) is bound by residues histidine 79, histidine 238, and aspartate 242. Histidine 265 acts as the Proton donor in catalysis.

This sequence belongs to the LpxC family. Zn(2+) is required as a cofactor.

The enzyme catalyses a UDP-3-O-[(3R)-3-hydroxyacyl]-N-acetyl-alpha-D-glucosamine + H2O = a UDP-3-O-[(3R)-3-hydroxyacyl]-alpha-D-glucosamine + acetate. Its pathway is glycolipid biosynthesis; lipid IV(A) biosynthesis; lipid IV(A) from (3R)-3-hydroxytetradecanoyl-[acyl-carrier-protein] and UDP-N-acetyl-alpha-D-glucosamine: step 2/6. In terms of biological role, catalyzes the hydrolysis of UDP-3-O-myristoyl-N-acetylglucosamine to form UDP-3-O-myristoylglucosamine and acetate, the committed step in lipid A biosynthesis. This Photobacterium profundum (strain SS9) protein is UDP-3-O-acyl-N-acetylglucosamine deacetylase.